The sequence spans 430 residues: tRNA(Ile)-lysidine synthase (430 aa).

27-32 (SGGSDS) is an ATP binding site.

Belongs to the tRNA(Ile)-lysidine synthase family.

Its subcellular location is the cytoplasm. The catalysed reaction is cytidine(34) in tRNA(Ile2) + L-lysine + ATP = lysidine(34) in tRNA(Ile2) + AMP + diphosphate + H(+). Functionally, ligates lysine onto the cytidine present at position 34 of the AUA codon-specific tRNA(Ile) that contains the anticodon CAU, in an ATP-dependent manner. Cytidine is converted to lysidine, thus changing the amino acid specificity of the tRNA from methionine to isoleucine. This Rickettsia bellii (strain RML369-C) protein is tRNA(Ile)-lysidine synthase.